A 382-amino-acid polypeptide reads, in one-letter code: Aminotransferase FGSG_00049 (382 aa).

Residue Arg-80 coordinates pyridoxal 5'-phosphate. N6-(pyridoxal phosphate)lysine is present on Lys-181. Glu-217 is a binding site for pyridoxal 5'-phosphate.

Belongs to the class-IV pyridoxal-phosphate-dependent aminotransferase family. Pyridoxal 5'-phosphate is required as a cofactor.

It participates in mycotoxin biosynthesis. In terms of biological role, aminotransferase; part of the gene cluster that mediates the biosynthesis of gramillins A and B, bicyclic lipopeptides that induce cell death in maize leaves but not in wheat leaves. The nonribosomal peptide synthetase GRA1 incorporates respectively a glutamic adic (Glu), a leucine (Leu), a serine (Ser), a hydroxyglutamine (HOGln), a 2-amino decanoic acid, and 2 cysteins (CysB and CysA). The biosynthesis of 2-amino decanoic acid incorporated in gramillins could be initiated by a fatty acid synthase composed of the alpha and beta subunits FGSG_00036 and FGSG_11656. The cytochrome P450 monooxygenase FGSG_15680 could hydroxylate the fatty acid chain. Subsequent oxidation to the ketone by the oxidoreductase FGSG_00048 and transamination by aminotransferase FGSG_00049 could form 2-amino-decanoic acid. On the other hand, FGSG_15680 could also be responsible for the HO-modified glutamine at the gamma-position. Whether hydroxylation occurs on the fully assembled product or on the Gln residue prior to assembly into the gramillins requires further proof. The thioredoxin FGSG_00043 could also be required for the disulfide-bond formation between CysA and CysB. The specific involvement of the remaining proteins from the cluster is more difficult to discern, but could have broader regulatory (FGSG_00040 and FGSG_11657) or enzymatic functions (FGSG_00044 and FGSG_00045). The final C-domain of GRA1 does not possess the expected sequence of a termination CT domain, often implicated in macrocyclization and release of a cyclopeptidein fungal NRPs; and the thioesterase FGSG_00047 may act in concert with the terminal C-domain of GRA1 to catalyze the formation of the macrocyclic anhydride and release of the products. The sequence is that of Aminotransferase FGSG_00049 from Gibberella zeae (strain ATCC MYA-4620 / CBS 123657 / FGSC 9075 / NRRL 31084 / PH-1) (Wheat head blight fungus).